A 367-amino-acid chain; its full sequence is Alginate lyase (367 aa).

A signal peptide spans 1 to 24; that stretch reads MTAFKRIFSPALLVLALYGGAAHA. Substrate-binding positions include 63-64, 136-137, and Tyr-254; these read SK and HT.

It belongs to the polysaccharide lyase 5 family.

It is found in the periplasm. It catalyses the reaction Eliminative cleavage of alginate to give oligosaccharides with 4-deoxy-alpha-L-erythro-hex-4-enuronosyl groups at their non-reducing ends and beta-D-mannuronate at their reducing end.. Functionally, catalyzes the depolymerization of alginate by cleaving the beta-1,4 glycosidic bond between two adjacent sugar residues via a beta-elimination mechanism. May serve to degrade mislocalized alginate that is trapped in the periplasmic space. The protein is Alginate lyase of Pseudomonas putida (strain W619).